A 259-amino-acid chain; its full sequence is Phosphatidylserine decarboxylase proenzyme (259 aa).

Catalysis depends on charge relay system; for autoendoproteolytic cleavage activity residues Asp-86, His-142, and Ser-226. The Schiff-base intermediate with substrate; via pyruvic acid; for decarboxylase activity role is filled by Ser-226. Ser-226 carries the pyruvic acid (Ser); by autocatalysis modification.

Belongs to the phosphatidylserine decarboxylase family. PSD-B subfamily. Prokaryotic type I sub-subfamily. In terms of assembly, heterodimer of a large membrane-associated beta subunit and a small pyruvoyl-containing alpha subunit. The cofactor is pyruvate. In terms of processing, is synthesized initially as an inactive proenzyme. Formation of the active enzyme involves a self-maturation process in which the active site pyruvoyl group is generated from an internal serine residue via an autocatalytic post-translational modification. Two non-identical subunits are generated from the proenzyme in this reaction, and the pyruvate is formed at the N-terminus of the alpha chain, which is derived from the carboxyl end of the proenzyme. The autoendoproteolytic cleavage occurs by a canonical serine protease mechanism, in which the side chain hydroxyl group of the serine supplies its oxygen atom to form the C-terminus of the beta chain, while the remainder of the serine residue undergoes an oxidative deamination to produce ammonia and the pyruvoyl prosthetic group on the alpha chain. During this reaction, the Ser that is part of the protease active site of the proenzyme becomes the pyruvoyl prosthetic group, which constitutes an essential element of the active site of the mature decarboxylase.

The protein localises to the cell membrane. The enzyme catalyses a 1,2-diacyl-sn-glycero-3-phospho-L-serine + H(+) = a 1,2-diacyl-sn-glycero-3-phosphoethanolamine + CO2. It functions in the pathway phospholipid metabolism; phosphatidylethanolamine biosynthesis; phosphatidylethanolamine from CDP-diacylglycerol: step 2/2. Catalyzes the formation of phosphatidylethanolamine (PtdEtn) from phosphatidylserine (PtdSer). This chain is Phosphatidylserine decarboxylase proenzyme, found in Geobacillus sp. (strain WCH70).